The primary structure comprises 517 residues: 2-isopropylmalate synthase (517 aa).

In terms of domain architecture, Pyruvate carboxyltransferase spans 4-266 (INFFDTTLRD…ESTIQLNEIK (263 aa)). Residues Asp-13, His-201, His-203, and Asn-237 each contribute to the Mn(2+) site. The segment at 391-517 (EFESLQVHYG…IEIEKHHAIS (127 aa)) is regulatory domain.

It belongs to the alpha-IPM synthase/homocitrate synthase family. LeuA type 1 subfamily. As to quaternary structure, homodimer. It depends on Mn(2+) as a cofactor.

The protein localises to the cytoplasm. The catalysed reaction is 3-methyl-2-oxobutanoate + acetyl-CoA + H2O = (2S)-2-isopropylmalate + CoA + H(+). It participates in amino-acid biosynthesis; L-leucine biosynthesis; L-leucine from 3-methyl-2-oxobutanoate: step 1/4. Catalyzes the condensation of the acetyl group of acetyl-CoA with 3-methyl-2-oxobutanoate (2-ketoisovalerate) to form 3-carboxy-3-hydroxy-4-methylpentanoate (2-isopropylmalate). The chain is 2-isopropylmalate synthase from Bacillus pumilus (strain SAFR-032).